The chain runs to 160 residues: Snaclec subunit A (160 aa).

The signal sequence occupies residues 1-23; the sequence is MGRFILVNLGLLVVAFSLRGSEA. 3 disulfide bridges follow: cysteine 25-cysteine 36, cysteine 53-cysteine 150, and cysteine 125-cysteine 142. The 120-residue stretch at 32–151 folds into the C-type lectin domain; it reads YDKYCYKVFD…CDFTLPFICK (120 aa).

The protein belongs to the snaclec family. In terms of assembly, heterodimer of subunits A and B; disulfide-linked. Expressed by the venom gland.

The protein resides in the secreted. Functionally, interferes with one step of hemostasis (modulation of platelet aggregation, or coagulation cascade, for example). The protein is Snaclec subunit A of Philodryas olfersii (Green snake).